The following is a 321-amino-acid chain: D-alanine--D-alanine ligase (321 aa).

Residues 121-315 enclose the ATP-grasp domain; the sequence is RSWFLTNNIN…FVNLIEEILK (195 aa). An ATP-binding site is contributed by 148-199; sequence IKRPYVIKPFTQGSSIGVEVIFEEDDFNFANYDFPYGDEVIIEKYIKGRELQ. Residues glutamate 268, glutamate 282, and asparagine 284 each coordinate Mg(2+).

This sequence belongs to the D-alanine--D-alanine ligase family. Mg(2+) is required as a cofactor. It depends on Mn(2+) as a cofactor.

The protein resides in the cytoplasm. The catalysed reaction is 2 D-alanine + ATP = D-alanyl-D-alanine + ADP + phosphate + H(+). Its pathway is cell wall biogenesis; peptidoglycan biosynthesis. Functionally, cell wall formation. This is D-alanine--D-alanine ligase from Rickettsia bellii (strain OSU 85-389).